The sequence spans 127 residues: MAGNRYFEDQPYEVENPFNIMITLSPFDIDLSTTIMMPKTLLEANLFRFMDISYLVGLLQVPNKPKVIELFDIDTKITTFLTIRRDGDNFKFHGWNNILERKHYKAGDVIAFWWDLHHTRLNFKHVA.

Residues 35–127 constitute a DNA-binding region (TF-B3); the sequence is IMMPKTLLEA…HTRLNFKHVA (93 aa).

The protein resides in the nucleus. This is Putative B3 domain-containing protein At4g12617 from Arabidopsis thaliana (Mouse-ear cress).